Consider the following 369-residue polypeptide: Transcription initiation factor IIA large subunit (369 aa).

Polar residues-rich tracts occupy residues 113–210 (HGNS…QNSP) and 218–233 (TESSNTTPANSRNDVP). The interval 113–248 (HGNSNYYSPP…IHDLDDAGSP (136 aa)) is disordered. Ser249 carries the post-translational modification Phosphoserine. The disordered stretch occupies residues 282–319 (IEDNEDEKKPPVDTPSDEAINSDLDDPDSDEAPETEEG). Residues 304–319 (DLDDPDSDEAPETEEG) are compositionally biased toward acidic residues.

The protein belongs to the TFIIA subunit 1 family. TFIIA is a heterodimer of the large subunit and the small subunit gamma.

Its subcellular location is the nucleus. In terms of biological role, TFIIA is a component of the transcription machinery of RNA polymerase II and plays an important role in transcriptional activation. TFIIA in a complex with tbp mediates transcriptional activity. The chain is Transcription initiation factor IIA large subunit from Schizosaccharomyces pombe (strain 972 / ATCC 24843) (Fission yeast).